Here is a 633-residue protein sequence, read N- to C-terminus: Leucine-rich repeat and IQ domain-containing protein 3 (633 aa).

LRR repeat units lie at residues 51–72, 73–94, and 98–119; these read SLRV…QGCK, KLIK…TFWN, and NLKL…CVLS. An LRRCT domain is found at 132-179; it reads CPVSLKKGYRHVLVNSIWPLKALDHHVISDEEIIQNWHLPERFKTFSQ. One can recognise an IQ domain in the interval 215–244; that stretch reads HNSPVLIIQRWIRGFIVRKHLSPYFTRKRH. Positions 322–343 are disordered; that stretch reads NSKQPRHHIQKGQNEMKSDSED. A coiled-coil region spans residues 556-616; sequence EKREKRKYKQ…AKVEFINTYY (61 aa).

This Rattus norvegicus (Rat) protein is Leucine-rich repeat and IQ domain-containing protein 3 (Lrriq3).